Reading from the N-terminus, the 233-residue chain is Large ribosomal subunit protein eL6y (233 aa).

Positions 48–72 (HDAKSKVDAPVEKPPKFYPAEDVKK) are enriched in basic and acidic residues. The tract at residues 48–82 (HDAKSKVDAPVEKPPKFYPAEDVKKPLPNRRTAKP) is disordered.

Belongs to the eukaryotic ribosomal protein eL6 family.

This Arabidopsis thaliana (Mouse-ear cress) protein is Large ribosomal subunit protein eL6y (RPL6B).